We begin with the raw amino-acid sequence, 500 residues long: NAD(P)H-quinone oxidoreductase chain 4, chloroplastic (500 aa).

Transmembrane regions (helical) follow at residues Phe4–Leu24, Met37–Leu57, Leu87–Val107, Leu113–Ser130, Leu134–Met154, Phe167–Leu187, Ile211–His231, His242–Ile262, Ala272–Ala292, Met313–Leu333, Gln334–Asp354, Leu386–Thr406, Leu417–Leu437, and Leu462–Val482.

It belongs to the complex I subunit 4 family.

The protein localises to the plastid. The protein resides in the chloroplast thylakoid membrane. The enzyme catalyses a plastoquinone + NADH + (n+1) H(+)(in) = a plastoquinol + NAD(+) + n H(+)(out). The catalysed reaction is a plastoquinone + NADPH + (n+1) H(+)(in) = a plastoquinol + NADP(+) + n H(+)(out). The polypeptide is NAD(P)H-quinone oxidoreductase chain 4, chloroplastic (Oryza nivara (Indian wild rice)).